Reading from the N-terminus, the 104-residue chain is NADH-quinone oxidoreductase subunit K (104 aa).

3 helical membrane-spanning segments follow: residues 4–24, 31–51, and 67–87; these read VPAS…LFGA, VIVL…LVAF, and LFTM…LIAL.

It belongs to the complex I subunit 4L family. NDH-1 is composed of 14 different subunits. Subunits NuoA, H, J, K, L, M, N constitute the membrane sector of the complex.

It localises to the cell membrane. It catalyses the reaction a quinone + NADH + 5 H(+)(in) = a quinol + NAD(+) + 4 H(+)(out). In terms of biological role, NDH-1 shuttles electrons from NADH, via FMN and iron-sulfur (Fe-S) centers, to quinones in the respiratory chain. The immediate electron acceptor for the enzyme in this species is believed to be a menaquinone. Couples the redox reaction to proton translocation (for every two electrons transferred, four hydrogen ions are translocated across the cytoplasmic membrane), and thus conserves the redox energy in a proton gradient. The polypeptide is NADH-quinone oxidoreductase subunit K (Bacillus cereus (strain G9842)).